The sequence spans 57 residues: uncharacterized protein (57 aa).

A disordered region spans residues 1 to 57 (MITPIGKNSNSNSNSNSNSNSNSNSNSNSNSNSNSNSNSNSNSNSNSNSNSNSNSNN). Over residues 8-57 (NSNSNSNSNSNSNSNSNSNSNSNSNSNSNSNSNSNSNSNSNSNSNSNSNN) the composition is skewed to low complexity.

This is an uncharacterized protein from Dictyostelium discoideum (Social amoeba).